The sequence spans 83 residues: Small ribosomal subunit protein bS20 (83 aa).

Positions methionine 1–lysine 25 are disordered. Over residues threonine 16 to lysine 25 the composition is skewed to basic and acidic residues.

The protein belongs to the bacterial ribosomal protein bS20 family.

Its function is as follows. Binds directly to 16S ribosomal RNA. This is Small ribosomal subunit protein bS20 from Staphylococcus saprophyticus subsp. saprophyticus (strain ATCC 15305 / DSM 20229 / NCIMB 8711 / NCTC 7292 / S-41).